The sequence spans 186 residues: ATP synthase subunit b' (186 aa).

A helical membrane pass occupies residues 39–59; the sequence is IFWLLLALGAIYWLLKNIAIP.

The protein belongs to the ATPase B chain family. F-type ATPases have 2 components, F(1) - the catalytic core - and F(0) - the membrane proton channel. F(1) has five subunits: alpha(3), beta(3), gamma(1), delta(1), epsilon(1). F(0) has four main subunits: a(1), b(1), b'(1) and c(10-14). The alpha and beta chains form an alternating ring which encloses part of the gamma chain. F(1) is attached to F(0) by a central stalk formed by the gamma and epsilon chains, while a peripheral stalk is formed by the delta, b and b' chains.

It is found in the cellular chromatophore membrane. F(1)F(0) ATP synthase produces ATP from ADP in the presence of a proton or sodium gradient. F-type ATPases consist of two structural domains, F(1) containing the extramembraneous catalytic core and F(0) containing the membrane proton channel, linked together by a central stalk and a peripheral stalk. During catalysis, ATP synthesis in the catalytic domain of F(1) is coupled via a rotary mechanism of the central stalk subunits to proton translocation. Functionally, component of the F(0) channel, it forms part of the peripheral stalk, linking F(1) to F(0). The b'-subunit is a diverged and duplicated form of b found in plants and photosynthetic bacteria. The chain is ATP synthase subunit b' from Rhodobacter capsulatus (Rhodopseudomonas capsulata).